The primary structure comprises 41 residues: Probable cinnamyl alcohol dehydrogenase 2 (41 aa).

Belongs to the zinc-containing alcohol dehydrogenase family. The cofactor is Zn(2+).

It catalyses the reaction (E)-cinnamyl alcohol + NADP(+) = (E)-cinnamaldehyde + NADPH + H(+). It carries out the reaction (E)-coniferol + NADP(+) = (E)-coniferaldehyde + NADPH + H(+). The enzyme catalyses (E)-sinapyl alcohol + NADP(+) = (E)-sinapaldehyde + NADPH + H(+). The catalysed reaction is (E)-4-coumaroyl alcohol + NADP(+) = (E)-4-coumaraldehyde + NADPH + H(+). It catalyses the reaction (E)-caffeyl alcohol + NADP(+) = (E)-caffeyl aldehyde + NADPH + H(+). It participates in aromatic compound metabolism; phenylpropanoid biosynthesis. Its function is as follows. Involved in lignin biosynthesis. Catalyzes the final step specific for the production of lignin monomers, like coniferyl alcohol, sinapyl alcohol and 4-coumaryl alcohol. This is Probable cinnamyl alcohol dehydrogenase 2 from Pseudotsuga menziesii (Douglas-fir).